Reading from the N-terminus, the 359-residue chain is Phosphate acyltransferase (359 aa).

Residues 338–359 (AGGVQSAPETEAPGAHPSPHVA) are disordered.

Belongs to the PlsX family. Homodimer. Probably interacts with PlsY.

Its subcellular location is the cytoplasm. The enzyme catalyses a fatty acyl-[ACP] + phosphate = an acyl phosphate + holo-[ACP]. It functions in the pathway lipid metabolism; phospholipid metabolism. Its function is as follows. Catalyzes the reversible formation of acyl-phosphate (acyl-PO(4)) from acyl-[acyl-carrier-protein] (acyl-ACP). This enzyme utilizes acyl-ACP as fatty acyl donor, but not acyl-CoA. In Cupriavidus taiwanensis (strain DSM 17343 / BCRC 17206 / CCUG 44338 / CIP 107171 / LMG 19424 / R1) (Ralstonia taiwanensis (strain LMG 19424)), this protein is Phosphate acyltransferase.